The primary structure comprises 605 residues: UvrABC system protein C (605 aa).

The 80-residue stretch at 13-92 (SEPGVYLMKD…IKRYRPKYNV (80 aa)) folds into the GIY-YIG domain. Positions 205 to 240 (EKLMELLKEKMNESSMNFRFEEAAVYRDKIKSLEEM) constitute a UVR domain.

The protein belongs to the UvrC family. In terms of assembly, interacts with UvrB in an incision complex.

It localises to the cytoplasm. Its function is as follows. The UvrABC repair system catalyzes the recognition and processing of DNA lesions. UvrC both incises the 5' and 3' sides of the lesion. The N-terminal half is responsible for the 3' incision and the C-terminal half is responsible for the 5' incision. The chain is UvrABC system protein C from Clostridioides difficile (strain 630) (Peptoclostridium difficile).